The following is a 469-amino-acid chain: 3-isopropylmalate dehydratase large subunit (469 aa).

The [4Fe-4S] cluster site is built by Cys-346, Cys-406, and Cys-409.

It belongs to the aconitase/IPM isomerase family. LeuC type 1 subfamily. As to quaternary structure, heterodimer of LeuC and LeuD. The cofactor is [4Fe-4S] cluster.

It catalyses the reaction (2R,3S)-3-isopropylmalate = (2S)-2-isopropylmalate. Its pathway is amino-acid biosynthesis; L-leucine biosynthesis; L-leucine from 3-methyl-2-oxobutanoate: step 2/4. Catalyzes the isomerization between 2-isopropylmalate and 3-isopropylmalate, via the formation of 2-isopropylmaleate. This is 3-isopropylmalate dehydratase large subunit from Lysinibacillus sphaericus (strain C3-41).